A 65-amino-acid chain; its full sequence is Toxin VmKTx1 (65 aa).

Positions 1–21 (MKTSCLLTILLLSFLVAVAVA) are cleaved as a signal peptide. Residues 22–28 (EGERSAR) constitute a propeptide that is removed on maturation. Intrachain disulfides connect Cys34/Cys54, Cys40/Cys59, Cys44/Cys61, and Cys49/Cys64. A Cysteine amide modification is found at Cys64.

Belongs to the short scorpion toxin superfamily. Potassium channel inhibitor family. Alpha-KTx 23 subfamily. As to expression, expressed by the venom gland.

Its subcellular location is the secreted. Voltage-gated potassium channel inhibitor. Selectively and reversibly binds (Kd=0.77 nM) and blocks hKv1.3/KCNA3 potassium channels of human T-lymphocytes. Also shows a very weak effect on hKv1.2/KCNA2 (Kd=7.1 uM). Also reduces the fraction of CD40L expressing T cells that are stimulated by alphaCD3/alphaCD28. This Vaejovis mexicanus smithi (Mexican scorpion) protein is Toxin VmKTx1.